Consider the following 683-residue polypeptide: DNA-directed RNA polymerase subunit beta' (683 aa).

Zn(2+) is bound by residues Cys-69, Cys-71, Cys-87, and Cys-90. The Mg(2+) site is built by Asp-489, Asp-491, and Asp-493.

Belongs to the RNA polymerase beta' chain family. RpoC1 subfamily. As to quaternary structure, in plastids the minimal PEP RNA polymerase catalytic core is composed of four subunits: alpha, beta, beta', and beta''. When a (nuclear-encoded) sigma factor is associated with the core the holoenzyme is formed, which can initiate transcription. It depends on Mg(2+) as a cofactor. Zn(2+) is required as a cofactor.

The protein resides in the plastid. It is found in the chloroplast. The enzyme catalyses RNA(n) + a ribonucleoside 5'-triphosphate = RNA(n+1) + diphosphate. In terms of biological role, DNA-dependent RNA polymerase catalyzes the transcription of DNA into RNA using the four ribonucleoside triphosphates as substrates. This is DNA-directed RNA polymerase subunit beta' from Triticum aestivum (Wheat).